A 340-amino-acid chain; its full sequence is GTPase Obg (340 aa).

One can recognise an Obg domain in the interval 1–159 (MDFIDEVKLY…KYVVLKLKVL (159 aa)). The 170-residue stretch at 160 to 329 (SDVGIIGMPN…LNEKLKKGSS (170 aa)) folds into the OBG-type G domain. GTP-binding positions include 166–173 (GMPNAGKS), 191–195 (FTTIK), 212–215 (DIPG), 279–282 (NKCD), and 310–312 (GED). Residues Ser173 and Thr193 each contribute to the Mg(2+) site.

This sequence belongs to the TRAFAC class OBG-HflX-like GTPase superfamily. OBG GTPase family. Monomer. Mg(2+) is required as a cofactor.

It localises to the cytoplasm. In terms of biological role, an essential GTPase which binds GTP, GDP and possibly (p)ppGpp with moderate affinity, with high nucleotide exchange rates and a fairly low GTP hydrolysis rate. Plays a role in control of the cell cycle, stress response, ribosome biogenesis and in those bacteria that undergo differentiation, in morphogenesis control. The chain is GTPase Obg from Wolbachia sp. subsp. Brugia malayi (strain TRS).